The sequence spans 104 residues: L-rhamnose mutarotase (104 aa).

Substrate is bound at residue Y18. H22 (proton donor) is an active-site residue. Residues Y41 and 76 to 77 (WW) each bind substrate.

Belongs to the rhamnose mutarotase family. Homodimer.

The protein localises to the cytoplasm. The catalysed reaction is alpha-L-rhamnose = beta-L-rhamnose. The protein operates within carbohydrate metabolism; L-rhamnose metabolism. In terms of biological role, involved in the anomeric conversion of L-rhamnose. The sequence is that of L-rhamnose mutarotase from Yersinia pseudotuberculosis serotype O:1b (strain IP 31758).